The following is a 198-amino-acid chain: Phosphoheptose isomerase (198 aa).

The SIS domain maps to Ile40 to Arg198. Asn55 to Gly57 is a substrate binding site. Zn(2+)-binding residues include His64 and Glu68. Residues Glu68, Asn97–Asp98, Ser123–Ser125, Ser128, and Gln175 contribute to the substrate site. Zn(2+) is bound by residues Gln175 and His183.

It belongs to the SIS family. GmhA subfamily. As to quaternary structure, homotetramer. It depends on Zn(2+) as a cofactor.

Its subcellular location is the cytoplasm. It carries out the reaction 2 D-sedoheptulose 7-phosphate = D-glycero-alpha-D-manno-heptose 7-phosphate + D-glycero-beta-D-manno-heptose 7-phosphate. It functions in the pathway carbohydrate biosynthesis; D-glycero-D-manno-heptose 7-phosphate biosynthesis; D-glycero-alpha-D-manno-heptose 7-phosphate and D-glycero-beta-D-manno-heptose 7-phosphate from sedoheptulose 7-phosphate: step 1/1. Its function is as follows. Catalyzes the isomerization of sedoheptulose 7-phosphate in D-glycero-D-manno-heptose 7-phosphate. In Bradyrhizobium sp. (strain ORS 278), this protein is Phosphoheptose isomerase.